A 158-amino-acid chain; its full sequence is Protein-export protein SecB (158 aa).

It belongs to the SecB family. Homotetramer, a dimer of dimers. One homotetramer interacts with 1 SecA dimer.

The protein localises to the cytoplasm. Its function is as follows. One of the proteins required for the normal export of preproteins out of the cell cytoplasm. It is a molecular chaperone that binds to a subset of precursor proteins, maintaining them in a translocation-competent state. It also specifically binds to its receptor SecA. The sequence is that of Protein-export protein SecB from Bartonella quintana (strain Toulouse) (Rochalimaea quintana).